We begin with the raw amino-acid sequence, 153 residues long: Small ribosomal subunit protein bS6 (153 aa).

Positions 94-153 (EAHEEGPSAMMQKRDRDDRPRRDGDRPDRGDRGDRGDRGPREGGRESFGDRPRRPREDRA) are disordered.

It belongs to the bacterial ribosomal protein bS6 family.

Binds together with bS18 to 16S ribosomal RNA. The polypeptide is Small ribosomal subunit protein bS6 (Allorhizobium ampelinum (strain ATCC BAA-846 / DSM 112012 / S4) (Agrobacterium vitis (strain S4))).